Here is a 677-residue protein sequence, read N- to C-terminus: High-affinity choline transport protein (677 aa).

The next 12 membrane-spanning stretches (helical) occupy residues proline 15–phenylalanine 35, phenylalanine 54–cysteine 74, leucine 94–valine 114, phenylalanine 144–phenylalanine 164, isoleucine 196–glutamine 216, alanine 233–valine 253, valine 265–leucine 285, tryptophan 319–alanine 339, phenylalanine 350–glycine 370, valine 412–leucine 432, valine 452–serine 472, and threonine 477–tyrosine 497.

The protein belongs to the BCCT transporter (TC 2.A.15) family.

The protein resides in the cell inner membrane. It catalyses the reaction choline(in) + H(+)(in) = choline(out) + H(+)(out). The protein operates within amine and polyamine biosynthesis; betaine biosynthesis via choline pathway. High-affinity uptake of choline driven by a proton-motive force. The sequence is that of High-affinity choline transport protein (betT) from Escherichia coli O157:H7.